Consider the following 689-residue polypeptide: DNA ligase (689 aa).

NAD(+) contacts are provided by residues 40–44, 89–90, and Glu-121; these read DAEYD and SL. Catalysis depends on Lys-123, which acts as the N6-AMP-lysine intermediate. NAD(+) contacts are provided by Arg-144, Glu-179, Lys-295, and Lys-319. Residues Cys-413, Cys-416, Cys-431, and Cys-437 each contribute to the Zn(2+) site. The region spanning 610-689 is the BRCT domain; it reads REQSSLTGKI…AEWLTLVRDI (80 aa).

This sequence belongs to the NAD-dependent DNA ligase family. LigA subfamily. The cofactor is Mg(2+). Requires Mn(2+) as cofactor.

It catalyses the reaction NAD(+) + (deoxyribonucleotide)n-3'-hydroxyl + 5'-phospho-(deoxyribonucleotide)m = (deoxyribonucleotide)n+m + AMP + beta-nicotinamide D-nucleotide.. Its function is as follows. DNA ligase that catalyzes the formation of phosphodiester linkages between 5'-phosphoryl and 3'-hydroxyl groups in double-stranded DNA using NAD as a coenzyme and as the energy source for the reaction. It is essential for DNA replication and repair of damaged DNA. The chain is DNA ligase from Rickettsia bellii (strain RML369-C).